The chain runs to 266 residues: 3-methyl-2-oxobutanoate hydroxymethyltransferase (266 aa).

Mg(2+) contacts are provided by aspartate 45 and aspartate 84. 3-methyl-2-oxobutanoate is bound by residues 45–46 (DS), aspartate 84, and lysine 112. Residue glutamate 114 participates in Mg(2+) binding. Glutamate 181 serves as the catalytic Proton acceptor.

This sequence belongs to the PanB family. As to quaternary structure, homodecamer; pentamer of dimers. The cofactor is Mg(2+).

The protein localises to the cytoplasm. It catalyses the reaction 3-methyl-2-oxobutanoate + (6R)-5,10-methylene-5,6,7,8-tetrahydrofolate + H2O = 2-dehydropantoate + (6S)-5,6,7,8-tetrahydrofolate. It participates in cofactor biosynthesis; (R)-pantothenate biosynthesis; (R)-pantoate from 3-methyl-2-oxobutanoate: step 1/2. Functionally, catalyzes the reversible reaction in which hydroxymethyl group from 5,10-methylenetetrahydrofolate is transferred onto alpha-ketoisovalerate to form ketopantoate. This chain is 3-methyl-2-oxobutanoate hydroxymethyltransferase, found in Pseudomonas savastanoi pv. phaseolicola (strain 1448A / Race 6) (Pseudomonas syringae pv. phaseolicola (strain 1448A / Race 6)).